The chain runs to 505 residues: MAQIDFRKKINWHRRYRSPQGVKTEHEILRIFESDRGRIINSPAIRRLQQKTQVFPLERNAAVRTRLTHSMEVQQVGRYIAKEILSRLKELKLLEAYGLDELTGPFESIVEMSCLMHDIGNPPFGHFGEAAINDWFRQRLHPEDAESQPLTDDRCSVAVLRLRDGEEPLNELRRKIRQDLCHFEGNAQGIRLVHTLMRMNLTWAQVGGILKYTRPAWWRGETPETHHYLMKKPGYYLSEEAYIARLRKELNLALYSRFPLTWIMEAADDISYCVADLEDAVEKRIFTVEQLYHHLHEAWGQHEKGSLFSLVVENAWEKSRSNSLSRSTEDQFFMYLRVNTLNKLVPYAAQRFIDNLPAIFAGTFNHALLEDASECSDLLKLYKNVAVKHVFSHPDVEQLELQGYRVISGLLEIYRPLLSLSLSDFTELVEKERVKRSPIESRLFHKLSTRHRLAYVEAVSKLPSDSPEFPLWEYYYRCRLLQDYISGMTDLYAWDEYRRLMAVEQ.

Residues 66 to 273 (RLTHSMEVQQ…MEAADDISYC (208 aa)) enclose the HD domain.

This sequence belongs to the dGTPase family. Type 1 subfamily. Homotetramer. Mg(2+) serves as cofactor.

It carries out the reaction dGTP + H2O = 2'-deoxyguanosine + triphosphate + H(+). DGTPase preferentially hydrolyzes dGTP over the other canonical NTPs. In Escherichia coli O157:H7, this protein is Deoxyguanosinetriphosphate triphosphohydrolase.